Consider the following 107-residue polypeptide: Nucleoid-associated protein Atu0095 (107 aa).

Residues 81 to 107 (KGEAQAQEKMADLTAGLPLPPGMKLPF) are disordered. The span at 98–107 (PLPPGMKLPF) shows a compositional bias: pro residues.

Belongs to the YbaB/EbfC family. In terms of assembly, homodimer.

The protein localises to the cytoplasm. It localises to the nucleoid. Its function is as follows. Binds to DNA and alters its conformation. May be involved in regulation of gene expression, nucleoid organization and DNA protection. The protein is Nucleoid-associated protein Atu0095 of Agrobacterium fabrum (strain C58 / ATCC 33970) (Agrobacterium tumefaciens (strain C58)).